A 382-amino-acid polypeptide reads, in one-letter code: ATP phosphoribosyltransferase regulatory subunit (382 aa).

Belongs to the class-II aminoacyl-tRNA synthetase family. HisZ subfamily. In terms of assembly, heteromultimer composed of HisG and HisZ subunits.

The protein localises to the cytoplasm. It participates in amino-acid biosynthesis; L-histidine biosynthesis; L-histidine from 5-phospho-alpha-D-ribose 1-diphosphate: step 1/9. In terms of biological role, required for the first step of histidine biosynthesis. May allow the feedback regulation of ATP phosphoribosyltransferase activity by histidine. The sequence is that of ATP phosphoribosyltransferase regulatory subunit from Lacticaseibacillus paracasei (strain ATCC 334 / BCRC 17002 / CCUG 31169 / CIP 107868 / KCTC 3260 / NRRL B-441) (Lactobacillus paracasei).